We begin with the raw amino-acid sequence, 366 residues long: Phospho-N-acetylmuramoyl-pentapeptide-transferase (366 aa).

10 helical membrane passes run alanine 25–asparagine 45, glycine 70–tryptophan 90, leucine 93–phenylalanine 113, leucine 134–alanine 154, phenylalanine 174–glycine 194, glycine 205–alanine 225, leucine 245–proline 265, alanine 268–valine 288, valine 297–phenylalanine 317, and glutamine 343–leucine 363.

The protein belongs to the glycosyltransferase 4 family. MraY subfamily. Mg(2+) serves as cofactor.

The protein localises to the cell inner membrane. It carries out the reaction UDP-N-acetyl-alpha-D-muramoyl-L-alanyl-gamma-D-glutamyl-meso-2,6-diaminopimeloyl-D-alanyl-D-alanine + di-trans,octa-cis-undecaprenyl phosphate = di-trans,octa-cis-undecaprenyl diphospho-N-acetyl-alpha-D-muramoyl-L-alanyl-D-glutamyl-meso-2,6-diaminopimeloyl-D-alanyl-D-alanine + UMP. It functions in the pathway cell wall biogenesis; peptidoglycan biosynthesis. Its function is as follows. Catalyzes the initial step of the lipid cycle reactions in the biosynthesis of the cell wall peptidoglycan: transfers peptidoglycan precursor phospho-MurNAc-pentapeptide from UDP-MurNAc-pentapeptide onto the lipid carrier undecaprenyl phosphate, yielding undecaprenyl-pyrophosphoryl-MurNAc-pentapeptide, known as lipid I. This is Phospho-N-acetylmuramoyl-pentapeptide-transferase from Agrobacterium fabrum (strain C58 / ATCC 33970) (Agrobacterium tumefaciens (strain C58)).